Reading from the N-terminus, the 843-residue chain is DNA-directed RNA polymerase subunit beta' (843 aa).

Cysteine 70, cysteine 72, cysteine 85, and cysteine 88 together coordinate Zn(2+). Mg(2+) is bound by residues aspartate 686, aspartate 688, and aspartate 690.

The protein belongs to the RNA polymerase beta' chain family. RpoC1 subfamily. As to quaternary structure, in plastids the minimal PEP RNA polymerase catalytic core is composed of four subunits: alpha, beta, beta', and beta''. When a (nuclear-encoded) sigma factor is associated with the core the holoenzyme is formed, which can initiate transcription. Mg(2+) serves as cofactor. Requires Zn(2+) as cofactor.

It is found in the plastid. The protein resides in the chloroplast. It catalyses the reaction RNA(n) + a ribonucleoside 5'-triphosphate = RNA(n+1) + diphosphate. DNA-dependent RNA polymerase catalyzes the transcription of DNA into RNA using the four ribonucleoside triphosphates as substrates. This chain is DNA-directed RNA polymerase subunit beta', found in Trieres chinensis (Marine centric diatom).